Reading from the N-terminus, the 299-residue chain is 4-hydroxy-tetrahydrodipicolinate synthase (299 aa).

Thr47 is a binding site for pyruvate. Tyr136 functions as the Proton donor/acceptor in the catalytic mechanism. Lys164 acts as the Schiff-base intermediate with substrate in catalysis. Position 205 (Ala205) interacts with pyruvate.

It belongs to the DapA family. Homotetramer; dimer of dimers.

The protein resides in the cytoplasm. It catalyses the reaction L-aspartate 4-semialdehyde + pyruvate = (2S,4S)-4-hydroxy-2,3,4,5-tetrahydrodipicolinate + H2O + H(+). It participates in amino-acid biosynthesis; L-lysine biosynthesis via DAP pathway; (S)-tetrahydrodipicolinate from L-aspartate: step 3/4. Its function is as follows. Catalyzes the condensation of (S)-aspartate-beta-semialdehyde [(S)-ASA] and pyruvate to 4-hydroxy-tetrahydrodipicolinate (HTPA). The protein is 4-hydroxy-tetrahydrodipicolinate synthase of Pediococcus pentosaceus (strain ATCC 25745 / CCUG 21536 / LMG 10740 / 183-1w).